Reading from the N-terminus, the 336-residue chain is Glyceraldehyde-3-phosphate dehydrogenase (336 aa).

Residues 12–13 (RI), aspartate 34, arginine 78, and serine 120 contribute to the NAD(+) site. Residues 151–153 (SCT) and threonine 182 each bind D-glyceraldehyde 3-phosphate. Cysteine 152 acts as the Nucleophile in catalysis. Residue asparagine 183 coordinates NAD(+). Residues 211–212 (NG) and arginine 234 each bind D-glyceraldehyde 3-phosphate. NAD(+) is bound at residue asparagine 316.

This sequence belongs to the glyceraldehyde-3-phosphate dehydrogenase family. As to quaternary structure, homotetramer.

It is found in the cytoplasm. The catalysed reaction is D-glyceraldehyde 3-phosphate + phosphate + NAD(+) = (2R)-3-phospho-glyceroyl phosphate + NADH + H(+). It participates in carbohydrate degradation; glycolysis; pyruvate from D-glyceraldehyde 3-phosphate: step 1/5. Its function is as follows. Catalyzes the oxidative phosphorylation of glyceraldehyde 3-phosphate (G3P) to 1,3-bisphosphoglycerate (BPG) using the cofactor NAD. The first reaction step involves the formation of a hemiacetal intermediate between G3P and a cysteine residue, and this hemiacetal intermediate is then oxidized to a thioester, with concomitant reduction of NAD to NADH. The reduced NADH is then exchanged with the second NAD, and the thioester is attacked by a nucleophilic inorganic phosphate to produce BPG. This Heyndrickxia coagulans (Weizmannia coagulans) protein is Glyceraldehyde-3-phosphate dehydrogenase (gap).